The primary structure comprises 232 residues: tRNA (guanine-N(1)-)-methyltransferase (232 aa).

S-adenosyl-L-methionine contacts are provided by residues G111 and 131 to 136 (IGDYIL).

Belongs to the RNA methyltransferase TrmD family. As to quaternary structure, homodimer.

Its subcellular location is the cytoplasm. It catalyses the reaction guanosine(37) in tRNA + S-adenosyl-L-methionine = N(1)-methylguanosine(37) in tRNA + S-adenosyl-L-homocysteine + H(+). Specifically methylates guanosine-37 in various tRNAs. This is tRNA (guanine-N(1)-)-methyltransferase from Bartonella quintana (strain Toulouse) (Rochalimaea quintana).